The sequence spans 592 residues: Putative phosphatidylinositol 4-kinase alpha-like protein P2 (592 aa).

The segment at 180-318 (EQLVEENTGS…ISWQAAIFKL (139 aa)) is pleckstrin homology (PH) domain conferring phosphoinositide binding specificity. The region spanning 275-576 (KVKRCGVSEL…VIQSCFLSNR (302 aa)) is the PI3K/PI4K catalytic domain. The interval 281–287 (VSELEKE) is G-loop. The catalytic loop stretch occupies residues 441–449 (QIKDRHNGN). Residues 460 to 484 (HIDFGFMFESSPGGNLGWEPDIKLT) are activation loop.

The protein belongs to the PI3/PI4-kinase family. Type III PI4K subfamily.

The protein is Putative phosphatidylinositol 4-kinase alpha-like protein P2 (PI4KAP2) of Homo sapiens (Human).